Consider the following 78-residue polypeptide: MTLVTFIENLTSTVTEIGWSLFILAWAIGWALRGSPIPIFRIKRGGQDLLEDAIIAAFFLAIGSTIFYLISYIASQVS.

A run of 2 helical transmembrane segments spans residues 12–32 (STVTEIGWSLFILAWAIGWAL) and 53–73 (AIIAAFFLAIGSTIFYLISYI).

As to quaternary structure, forms a complex composed of CedA, CedA1 and CedA2.

It is found in the cell membrane. Part of the Ced system, which is involved in DNA import. The sequence is that of DNA import protein CedA1 from Sulfolobus acidocaldarius (strain ATCC 33909 / DSM 639 / JCM 8929 / NBRC 15157 / NCIMB 11770).